A 109-amino-acid polypeptide reads, in one-letter code: Nucleoid-associated protein CC_0268 (109 aa).

The protein belongs to the YbaB/EbfC family. Homodimer.

The protein localises to the cytoplasm. It localises to the nucleoid. Binds to DNA and alters its conformation. May be involved in regulation of gene expression, nucleoid organization and DNA protection. The polypeptide is Nucleoid-associated protein CC_0268 (Caulobacter vibrioides (strain ATCC 19089 / CIP 103742 / CB 15) (Caulobacter crescentus)).